The following is a 201-amino-acid chain: CASP-like protein 1E1 (201 aa).

Topologically, residues 1-36 (MESQFRPGFDVSQGAGGRASKFGDVVAPTSSTQLPG) are cytoplasmic. Residues 37-57 (IILRIVAIVLTFISAVVMGAA) traverse the membrane as a helical segment. Residues 58 to 87 (RQTTTVTGIDAETALLTSITVTVKSTYSAA) lie on the Extracellular side of the membrane. The helical transmembrane segment at 88-108 (YVYFVVANVLVFFYSVVSLVL) threads the bilayer. Over 109-127 (SMVNKARLTSMSLPFSIAD) the chain is Cytoplasmic. The helical transmembrane segment at 128–148 (LLMVVLLFSSNGAAAAISVVA) threads the bilayer. At 149-173 (EKGQQNLAGWDKICNLFGGLCARVN) the chain is on the extracellular side. The chain crosses the membrane as a helical span at residues 174–194 (AAIVLSMLASVAYVILVVFGM). Topologically, residues 195–201 (ANLRRSQ) are cytoplasmic.

It belongs to the Casparian strip membrane proteins (CASP) family. As to quaternary structure, homodimer and heterodimers.

The protein resides in the cell membrane. The polypeptide is CASP-like protein 1E1 (Musa acuminata (Banana)).